The sequence spans 716 residues: Zinc finger CCCH domain-containing protein 30 (716 aa).

ANK repeat units lie at residues 90-120 and 125-157; these read DYRT…DVNR and DQTT…DLNL. Residues 201-231 form a disordered region; it reads VTNVPNRSSSPCHSPTGENGGSGSGSPLGSP. Polar residues predominate over residues 203–213; it reads NVPNRSSSPCH. 2 consecutive C3H1-type zinc fingers follow at residues 306-328 and 336-360; these read PCPD…HGVF and QYRT…HTPE. The tract at residues 521–562 is disordered; sequence FQQQQQQQQSMLSPINTSFSSPKSVDHSLFSGGGRMSPRNVV. A compositionally biased stretch (polar residues) spans 530-543; the sequence is SMLSPINTSFSSPK. Position 566 is a phosphoserine (S566). The segment covering 583-594 has biased composition (low complexity); the sequence is QQQQQQQQQQHQ. Disordered regions lie at residues 583 to 638 and 667 to 692; these read QQQQ…MSSE and PAEA…PVEP. Residues 605 to 630 are compositionally biased toward polar residues; sequence TNSSPIVGSPVNNNTWSSKWGSSNGQ.

The protein is Zinc finger CCCH domain-containing protein 30 of Arabidopsis thaliana (Mouse-ear cress).